The sequence spans 816 residues: uncharacterized protein (816 aa).

Disordered regions lie at residues 1 to 34 (MLFN…QQES), 65 to 101 (RQNN…GYKN), 154 to 406 (DEKD…ENPE), and 770 to 816 (RQHK…VMYA). The span at 18 to 32 (NQSSANTQNQQAHQQ) shows a compositional bias: low complexity. The segment covering 83 to 92 (VSATSAYSKQ) has biased composition (polar residues). A compositionally biased stretch (low complexity) spans 161–223 (TTTSSSTSTS…STSTTSTSTT (63 aa)). Residues 246-260 (ESTSIGKGTADSAQI) show a composition bias toward polar residues. Residue serine 286 is modified to Phosphoserine. Over residues 292–316 (DEQKEEKSDVKKVNPPSGEEKKEVE) the composition is skewed to basic and acidic residues. The segment covering 317 to 326 (AEGDAEEETE) has biased composition (acidic residues). Positions 327 to 342 (QSSAEESAERTSTPET) are enriched in low complexity. Serine 343 and serine 347 each carry phosphoserine. Over residues 343–353 (SEPESEEDESP) the composition is skewed to acidic residues. Over residues 380–396 (KSPTSSSTQKSKTAAPS) the composition is skewed to low complexity. Composition is skewed to basic and acidic residues over residues 770 to 792 (RQHK…DRSQ) and 799 to 816 (PKDD…VMYA). Threonine 809 is modified (phosphothreonine).

Pyrophosphorylated by 5-diphosphoinositol pentakisphosphate (5-IP7). Serine pyrophosphorylation is achieved by Mg(2+)-dependent, but enzyme independent transfer of a beta-phosphate from a inositol pyrophosphate to a pre-phosphorylated serine residue.

This is an uncharacterized protein from Saccharomyces cerevisiae (strain ATCC 204508 / S288c) (Baker's yeast).